Consider the following 542-residue polypeptide: CTP synthase (542 aa).

The tract at residues 1–265 is amidoligase domain; sequence MARYIFITGG…DQEVLSAFGI (265 aa). S13 provides a ligand contact to CTP. S13 serves as a coordination point for UTP. 14–19 lines the ATP pocket; the sequence is SLGKGL. Y54 is an L-glutamine binding site. D71 contacts ATP. The Mg(2+) site is built by D71 and E139. Residues 146–148, 186–191, and K222 contribute to the CTP site; these read DIE and KTKPTQ. Residues 186 to 191 and K222 each bind UTP; that span reads KTKPTQ. 238–240 is an ATP binding site; sequence RDV. Residues 291 to 541 enclose the Glutamine amidotransferase type-1 domain; the sequence is TIAIVGKYTG…IAAAMEQSRL (251 aa). L-glutamine is bound at residue G353. C380 acts as the Nucleophile; for glutamine hydrolysis in catalysis. L-glutamine-binding positions include 381 to 384, E404, and R469; that span reads FGMQ. Residues H514 and E516 contribute to the active site.

The protein belongs to the CTP synthase family. As to quaternary structure, homotetramer.

It catalyses the reaction UTP + L-glutamine + ATP + H2O = CTP + L-glutamate + ADP + phosphate + 2 H(+). The catalysed reaction is L-glutamine + H2O = L-glutamate + NH4(+). The enzyme catalyses UTP + NH4(+) + ATP = CTP + ADP + phosphate + 2 H(+). It functions in the pathway pyrimidine metabolism; CTP biosynthesis via de novo pathway; CTP from UDP: step 2/2. Allosterically activated by GTP, when glutamine is the substrate; GTP has no effect on the reaction when ammonia is the substrate. The allosteric effector GTP functions by stabilizing the protein conformation that binds the tetrahedral intermediate(s) formed during glutamine hydrolysis. Inhibited by the product CTP, via allosteric rather than competitive inhibition. In terms of biological role, catalyzes the ATP-dependent amination of UTP to CTP with either L-glutamine or ammonia as the source of nitrogen. Regulates intracellular CTP levels through interactions with the four ribonucleotide triphosphates. The sequence is that of CTP synthase from Beijerinckia indica subsp. indica (strain ATCC 9039 / DSM 1715 / NCIMB 8712).